A 278-amino-acid chain; its full sequence is Tryptophan synthase alpha chain (278 aa).

Catalysis depends on proton acceptor residues E49 and D60.

It belongs to the TrpA family. In terms of assembly, tetramer of two alpha and two beta chains.

The enzyme catalyses (1S,2R)-1-C-(indol-3-yl)glycerol 3-phosphate + L-serine = D-glyceraldehyde 3-phosphate + L-tryptophan + H2O. The protein operates within amino-acid biosynthesis; L-tryptophan biosynthesis; L-tryptophan from chorismate: step 5/5. Its function is as follows. The alpha subunit is responsible for the aldol cleavage of indoleglycerol phosphate to indole and glyceraldehyde 3-phosphate. This chain is Tryptophan synthase alpha chain, found in Rhodopirellula baltica (strain DSM 10527 / NCIMB 13988 / SH1).